The sequence spans 280 residues: Phosphonates import ATP-binding protein PhnC (280 aa).

The 236-residue stretch at 4 to 239 (ITVTNLHKSY…VIDDIYGNIQ (236 aa)) folds into the ABC transporter domain. 36–43 (GESGAGKS) is an ATP binding site. The tract at residues 246 to 280 (GDDANADVAPTTSSDGGTDAAGGPDQQPASDPHLS) is disordered.

The protein belongs to the ABC transporter superfamily. Phosphonates importer (TC 3.A.1.9.1) family. As to quaternary structure, the complex is composed of two ATP-binding proteins (PhnC), two transmembrane proteins (PhnE) and a solute-binding protein (PhnD).

The protein localises to the cell membrane. The enzyme catalyses phosphonate(out) + ATP + H2O = phosphonate(in) + ADP + phosphate + H(+). In terms of biological role, part of the ABC transporter complex PhnCDE involved in phosphonates import. Responsible for energy coupling to the transport system. The chain is Phosphonates import ATP-binding protein PhnC from Halobacterium salinarum (strain ATCC 700922 / JCM 11081 / NRC-1) (Halobacterium halobium).